Reading from the N-terminus, the 359-residue chain is Maleylacetate reductase 2 (359 aa).

This sequence belongs to the iron-containing alcohol dehydrogenase family. In terms of assembly, homodimer.

It carries out the reaction 3-oxoadipate + NAD(+) = maleylacetate + NADH + H(+). The catalysed reaction is 3-oxoadipate + NADP(+) = maleylacetate + NADPH + H(+). It participates in aromatic compound metabolism; 3-chlorocatechol degradation. Inhibited by p-chloromercuribenzoate and by 3-oxoadipate, and, in a temperature-dependent manner, by manganese. In terms of biological role, plays a major role in the degradation of chloroaromatic compounds by channeling maleylacetate and some of its substituted derivatives into the 3-oxoadipate pathway. This enzyme converts maleylacetate and 2-chloromaleylacetate with similar efficiencies. NADH is preferred to NADPH as the cosubstrate. This chain is Maleylacetate reductase 2 (tfdFII), found in Cupriavidus pinatubonensis (strain JMP 134 / LMG 1197) (Cupriavidus necator (strain JMP 134)).